The sequence spans 197 residues: Recombination protein RecR (197 aa).

The C4-type zinc-finger motif lies at 57 to 72 (CSTCFGITESDPCHLC). Residues 79–174 (ASICVVEEPQ…KVTRLAHGIP (96 aa)) form the Toprim domain.

This sequence belongs to the RecR family.

Its function is as follows. May play a role in DNA repair. It seems to be involved in an RecBC-independent recombinational process of DNA repair. It may act with RecF and RecO. This Geotalea uraniireducens (strain Rf4) (Geobacter uraniireducens) protein is Recombination protein RecR.